The primary structure comprises 361 residues: S-adenosylmethionine:tRNA ribosyltransferase-isomerase (361 aa).

Belongs to the QueA family. As to quaternary structure, monomer.

It is found in the cytoplasm. It catalyses the reaction 7-aminomethyl-7-carbaguanosine(34) in tRNA + S-adenosyl-L-methionine = epoxyqueuosine(34) in tRNA + adenine + L-methionine + 2 H(+). Its pathway is tRNA modification; tRNA-queuosine biosynthesis. Functionally, transfers and isomerizes the ribose moiety from AdoMet to the 7-aminomethyl group of 7-deazaguanine (preQ1-tRNA) to give epoxyqueuosine (oQ-tRNA). The protein is S-adenosylmethionine:tRNA ribosyltransferase-isomerase of Glaesserella parasuis serovar 5 (strain SH0165) (Haemophilus parasuis).